The following is a 646-amino-acid chain: Macrolide export ATP-binding/permease protein MacB (646 aa).

In terms of domain architecture, ABC transporter spans 5–243 (IELKGVSRTY…TLPKTNRIRQ (239 aa)). 41–48 (GASGSGKS) contacts ATP. 4 helical membrane-spanning segments follow: residues 272 to 292 (TLTM…VALG), 518 to 538 (FSIL…IGVM), 570 to 590 (IIEA…LSYI), and 611 to 631 (AAVA…YLPA).

The protein belongs to the ABC transporter superfamily. Macrolide exporter (TC 3.A.1.122) family. In terms of assembly, homodimer. Part of the tripartite efflux system MacAB-TolC, which is composed of an inner membrane transporter, MacB, a periplasmic membrane fusion protein, MacA, and an outer membrane component, TolC. The complex forms a large protein conduit and can translocate molecules across both the inner and outer membranes. Interacts with MacA.

The protein localises to the cell inner membrane. Part of the tripartite efflux system MacAB-TolC. MacB is a non-canonical ABC transporter that contains transmembrane domains (TMD), which form a pore in the inner membrane, and an ATP-binding domain (NBD), which is responsible for energy generation. Confers resistance against macrolides. In Escherichia coli, this protein is Macrolide export ATP-binding/permease protein MacB.